A 375-amino-acid chain; its full sequence is Vasculin (375 aa).

Disordered stretches follow at residues 49-109 (SSDA…TSEI) and 356-375 (DSVQKEDSETSSSSDTSDDE). Positions 96-108 (MKSQLHSENNTSE) are enriched in polar residues. Positions 365-375 (TSSSSDTSDDE) are enriched in low complexity.

The protein belongs to the vasculin family.

It localises to the nucleus. In terms of biological role, functions as a GC-rich promoter-specific transactivating transcription factor. The protein is Vasculin (gpbp1) of Xenopus tropicalis (Western clawed frog).